We begin with the raw amino-acid sequence, 129 residues long: Sulfurtransferase TusD (129 aa).

Residue C79 is the Cysteine persulfide intermediate of the active site.

The protein belongs to the DsrE/TusD family. As to quaternary structure, heterohexamer, formed by a dimer of trimers. The hexameric TusBCD complex contains 2 copies each of TusB, TusC and TusD. The TusBCD complex interacts with TusE.

It localises to the cytoplasm. Its function is as follows. Part of a sulfur-relay system required for 2-thiolation of 5-methylaminomethyl-2-thiouridine (mnm(5)s(2)U) at tRNA wobble positions. Accepts sulfur from TusA and transfers it in turn to TusE. The sequence is that of Sulfurtransferase TusD from Pectobacterium atrosepticum (strain SCRI 1043 / ATCC BAA-672) (Erwinia carotovora subsp. atroseptica).